A 1193-amino-acid polypeptide reads, in one-letter code: K(+) efflux antiporter 1, chloroplastic (1193 aa).

A chloroplast-targeting transit peptide spans 1–49 (MEYASTFQRPILFHGGDGASYCFPNRLISPKGISITSGDSKVHSCFRLR). The Stromal portion of the chain corresponds to 50-585 (RNVAQSGTLN…MIPHQEVNEE (536 aa)). The segment at 103 to 135 (SLGNADSNDHRIGESSESSDETEATDLKDARVE) is disordered. Residues 131 to 355 (DARVENDTDS…RAEKSLSISQ (225 aa)) adopt a coiled-coil conformation. Residue Lys168 is modified to N6-acetyllysine; by NSI. A compositionally biased stretch (polar residues) spans 351–364 (LSISQTPEETQGQL). Disordered regions lie at residues 351–372 (LSIS…TSQE) and 421–474 (QPYE…NSPK). The span at 439–465 (KVVEADSEKPKINVQTKKQETQKDLPK) shows a compositional bias: basic and acidic residues. A helical membrane pass occupies residues 586 to 606 (EASLFDFLWLLLASVIFVPLF). Residues 607–612 (QKIPGG) lie on the Chloroplast intermembrane side of the membrane. The chain crosses the membrane as a helical span at residues 613–633 (SPVLGYLAAGILIGPYGLSII). Residues 634–640 (RNVHGTR) lie on the Stromal side of the membrane. Residues 641-661 (AIAEFGVVFLLFNIGLELSVE) form a helical membrane-spanning segment. Topologically, residues 662-668 (RLSSMKK) are chloroplast intermembrane. A helical transmembrane segment spans residues 669–689 (YVFGLGSAQVLVTAAVVGLLA). At 690–698 (HYVAGQAGP) the chain is on the stromal side. A helical membrane pass occupies residues 699–719 (AAIVIGNGLALSSTAVVLQVL). Topologically, residues 720 to 733 (QERGESTSRHGRAS) are chloroplast intermembrane. A helical membrane pass occupies residues 734–754 (FSVLLFQDLAVVVLLILIPLI). Over 755 to 766 (SPNSSKGGIGFQ) the chain is Stromal. A helical transmembrane segment spans residues 767–787 (AIAEALGLAAVKAAVAITAII). Topologically, residues 788–827 (AGGRLLLRPIYKQIAENRNAEIFSANTLLVILGTSLLTAR) are chloroplast intermembrane. A helical transmembrane segment spans residues 828–848 (AGLSMALGAFLAGLLLAETEF). Over 849 to 860 (SLQVESDIAPYR) the chain is Stromal. Residues 861 to 881 (GLLLGLFFMTVGMSIDPKLLL) traverse the membrane as a helical segment. Over 882-883 (SN) the chain is Chloroplast intermembrane. A helical membrane pass occupies residues 884 to 904 (FPVIVGTLGLLIVGKTMLVVI). The Stromal segment spans residues 905–912 (MGKLFGIS). A helical membrane pass occupies residues 913–933 (IISAIRVGLLLAPGGEFAFVA). Residues 934-948 (FGEAVNQGIMSPQLS) lie on the Chloroplast intermembrane side of the membrane. Residues 949 to 969 (SLLFLVVGISMAITPWLAAGG) form a helical membrane-spanning segment. The Stromal portion of the chain corresponds to 970 to 1193 (QLIASRFELH…QIIEGGTVVI (224 aa)). An RCK N-terminal domain is found at 995 to 1112 (QGHIIICGFG…EKAGATAVVP (118 aa)). Residues 1165–1184 (GYSRTSKPKPQPSDASGDNQ) form a disordered region.

The protein belongs to the monovalent cation:proton antiporter 2 (CPA2) transporter (TC 2.A.37) family. KEA (TC 2.A.37.1) subfamily. Acetylated at Lys-168 by the stromal acetyltransferase enzyme NSI. Expressed in shoots and roots. Mainly localized to leaf veins, hypocotyls, mesophylls and guard cells. Accumulates at high levels in small and dividing plastids (at protein level).

The protein resides in the plastid. The protein localises to the chloroplast inner membrane. The catalysed reaction is K(+)(in) + H(+)(out) = K(+)(out) + H(+)(in). With respect to regulation, repressed by sodium ions Na(+). Functionally, electroneutral K(+)/H(+) efflux antiporter involved in chloroplastic K(+) homeostasis and osmotic adjustment, especially during plastid division and thylakoid membrane formation. Collaboratively with KEA2, adjusts alkaline stromal pH upon light to dark transitions in plastids. Together with KEA2, critical for chloroplast development, including chloroplast RNA-metabolism (e.g. rRNA maturation, polysome loading and RNA-protein interactions) and plastid gene expression (PGE), ion homeostasis, and photosynthesis. Contributes, during early seedling development, to the regulation of photosynthesis and abscisic acid- (ABA-) mediated primary root growth in a sucrose-dependent manner. Involved in the regulation of reactive oxygen and nitrogen species (ROS and RNS) metabolism. Required in roots for rapid hyperosmotic-induced Ca(2+) responses and for osmo-sensory potentiation in hyperosmotic conditions. May counteract resilience to drought and salt stress, involving photorespiratory pathway and stomata closure. This Arabidopsis thaliana (Mouse-ear cress) protein is K(+) efflux antiporter 1, chloroplastic.